A 958-amino-acid chain; its full sequence is Glycine dehydrogenase (decarboxylating) (958 aa).

An N6-(pyridoxal phosphate)lysine modification is found at K705.

Belongs to the GcvP family. As to quaternary structure, the glycine cleavage system is composed of four proteins: P, T, L and H. Pyridoxal 5'-phosphate is required as a cofactor.

It carries out the reaction N(6)-[(R)-lipoyl]-L-lysyl-[glycine-cleavage complex H protein] + glycine + H(+) = N(6)-[(R)-S(8)-aminomethyldihydrolipoyl]-L-lysyl-[glycine-cleavage complex H protein] + CO2. Its function is as follows. The glycine cleavage system catalyzes the degradation of glycine. The P protein binds the alpha-amino group of glycine through its pyridoxal phosphate cofactor; CO(2) is released and the remaining methylamine moiety is then transferred to the lipoamide cofactor of the H protein. The protein is Glycine dehydrogenase (decarboxylating) of Bdellovibrio bacteriovorus (strain ATCC 15356 / DSM 50701 / NCIMB 9529 / HD100).